Consider the following 219-residue polypeptide: Neurotrophic factor BDNF precursor form (219 aa).

Residues Ser1–Ala5 form the signal peptide. Residues Ala6–Arg114 constitute a propeptide that is removed on maturation. An N-linked (GlcNAc...) asparagine glycan is attached at Asn107. A disulfide bridge links Cys127 with Cys194.

This sequence belongs to the NGF-beta family.

It is found in the secreted. In terms of biological role, promotes the survival of neuronal populations that are all located either in the central nervous system or directly connected to it. The chain is Neurotrophic factor BDNF precursor form (BDNF) from Loxocemus bicolor (Mexican burrowing python).